A 149-amino-acid chain; its full sequence is MTTIDVKVLDPRMADQLPAYATPGSAGLDLRACLDAPLLLEPGQTQLIPTGLSIHIGDPGLAAVILPRSGLGHKHGIVLGNLVGLIDSDYQGPLMVSCWNRGLAAFTVQPLERIAQLVIVPVVQASFRVVDDFGASERGEGGFGSTGQR.

Substrate is bound by residues 68-70 (RSG), Asn-81, 85-87 (LID), and Met-95.

It belongs to the dUTPase family. Mg(2+) serves as cofactor.

It catalyses the reaction dUTP + H2O = dUMP + diphosphate + H(+). The protein operates within pyrimidine metabolism; dUMP biosynthesis; dUMP from dCTP (dUTP route): step 2/2. Its function is as follows. This enzyme is involved in nucleotide metabolism: it produces dUMP, the immediate precursor of thymidine nucleotides and it decreases the intracellular concentration of dUTP so that uracil cannot be incorporated into DNA. In Methylibium petroleiphilum (strain ATCC BAA-1232 / LMG 22953 / PM1), this protein is Deoxyuridine 5'-triphosphate nucleotidohydrolase.